Consider the following 49-residue polypeptide: Disintegrin eristostatin (49 aa).

Residues 1 to 49 (QEEPCATGPCCRRCKFKRAGKVCRVARGDWNDDYCTGKSCDCPKNPWNG) form the Disintegrin domain. 4 disulfide bridges follow: Cys-5–Cys-14, Cys-10–Cys-35, Cys-11–Cys-40, and Cys-23–Cys-42. The Cell attachment site signature appears at 27–29 (RGD).

This sequence belongs to the venom metalloproteinase (M12B) family. P-II subfamily. P-IIa sub-subfamily. Monomer. Expressed by the venom gland.

It is found in the secreted. Its function is as follows. Is a potent inhibitor of ADP-induced platelet aggregation. Acts by binding to alpha-IIb/beta-3 (ITGA2B/ITGB3) receptor on the platelet surface. Binds with the same high affinity to resting and activated platelets. Also binds the alpha-4/beta-1 (ITGA4/ITGB1) integrin. Is a potent inhibitor of human and murine melanoma metastases in mouse model systems, also due to the inhibition of binding between the alpha-4/beta-1 integrin and the vascular cell adhesion protein VCAM1. Reacts neither with the integrin alpha-V/beta-3 (ITGAV/ITGB3) vitronectin receptor nor with the integrin alpha-5/beta-1 (ITGA5/ITGB1) fibronectin receptor. Has no effect on cell proliferation or angiogenesis. Specifically inhibits cell migration on fibronectin, but not that on collagen IV or laminin. May involve fibronectin-binding integrins that mediate cell migration. The sequence is that of Disintegrin eristostatin from Eristicophis macmahoni (Leaf-nosed viper).